Here is a 373-residue protein sequence, read N- to C-terminus: UDP-N-acetylglucosamine--N-acetylmuramyl-(pentapeptide) pyrophosphoryl-undecaprenol N-acetylglucosamine transferase (373 aa).

UDP-N-acetyl-alpha-D-glucosamine-binding positions include 16–18, asparagine 128, arginine 164, serine 192, isoleucine 250, and glutamine 295; that span reads TGG.

It belongs to the glycosyltransferase 28 family. MurG subfamily.

The protein localises to the cell inner membrane. The catalysed reaction is di-trans,octa-cis-undecaprenyl diphospho-N-acetyl-alpha-D-muramoyl-L-alanyl-D-glutamyl-meso-2,6-diaminopimeloyl-D-alanyl-D-alanine + UDP-N-acetyl-alpha-D-glucosamine = di-trans,octa-cis-undecaprenyl diphospho-[N-acetyl-alpha-D-glucosaminyl-(1-&gt;4)]-N-acetyl-alpha-D-muramoyl-L-alanyl-D-glutamyl-meso-2,6-diaminopimeloyl-D-alanyl-D-alanine + UDP + H(+). It functions in the pathway cell wall biogenesis; peptidoglycan biosynthesis. Cell wall formation. Catalyzes the transfer of a GlcNAc subunit on undecaprenyl-pyrophosphoryl-MurNAc-pentapeptide (lipid intermediate I) to form undecaprenyl-pyrophosphoryl-MurNAc-(pentapeptide)GlcNAc (lipid intermediate II). The sequence is that of UDP-N-acetylglucosamine--N-acetylmuramyl-(pentapeptide) pyrophosphoryl-undecaprenol N-acetylglucosamine transferase from Paraburkholderia phymatum (strain DSM 17167 / CIP 108236 / LMG 21445 / STM815) (Burkholderia phymatum).